A 101-amino-acid polypeptide reads, in one-letter code: Urease subunit beta (101 aa).

It belongs to the urease beta subunit family. In terms of assembly, heterotrimer of UreA (gamma), UreB (beta) and UreC (alpha) subunits. Three heterotrimers associate to form the active enzyme.

It localises to the cytoplasm. The catalysed reaction is urea + 2 H2O + H(+) = hydrogencarbonate + 2 NH4(+). It functions in the pathway nitrogen metabolism; urea degradation; CO(2) and NH(3) from urea (urease route): step 1/1. The sequence is that of Urease subunit beta from Ruegeria pomeroyi (strain ATCC 700808 / DSM 15171 / DSS-3) (Silicibacter pomeroyi).